A 189-amino-acid polypeptide reads, in one-letter code: Ras-like protein 1 (189 aa).

10–17 (GAGGVGKS) is a binding site for GTP. The Effector region motif lies at 32 to 40 (YDPTIEDSY). GTP is bound by residues 57 to 61 (DTAGQ) and 116 to 119 (NKCD). C186 carries the cysteine methyl ester modification. Residue C186 is the site of S-geranylgeranyl cysteine attachment. Positions 187–189 (KML) are cleaved as a propeptide — removed in mature form.

The protein belongs to the small GTPase superfamily. Ras family.

Its subcellular location is the cell membrane. The enzyme catalyses GTP + H2O = GDP + phosphate + H(+). Its activity is regulated as follows. Alternates between an inactive form bound to GDP and an active form bound to GTP. Activated by a guanine nucleotide-exchange factor (GEF) and inactivated by a GTPase-activating protein (GAP). Ras proteins bind GDP/GTP and possess intrinsic GTPase activity. Plays a role in eye development by regulating cell growth, survival of postmitotic ommatidial cells and differentiation of photoreceptor cells. During larval development, mediates Ptth/tor signaling leading to the production of ecdysone, a hormone required for the initiation of metamorphosis. The chain is Ras-like protein 1 from Drosophila ananassae (Fruit fly).